The sequence spans 160 residues: Cytochrome b6-f complex subunit 4 (160 aa).

At 1–35 the chain is on the cytoplasmic side; sequence MATLKKPDLSDPKLRAKLAKGMGHNYYGEPAWPND. A helical membrane pass occupies residues 36 to 56; sequence LLYVFPVVIMGTFACIVALSV. Residues 57 to 94 lie on the Lumenal, thylakoid side of the membrane; sequence LDPAMVGEPADPFATPLEILPEWYLYPVFQILRSVPNK. A helical transmembrane segment spans residues 95-115; it reads LLGVLLMASVPLGLILVPFIE. Residues 116–130 lie on the Cytoplasmic side of the membrane; sequence NVNKFQNPFRRPVAT. Residues 131-151 traverse the membrane as a helical segment; it reads TIFLFGTLVTIWLGIGATFPL. Residues 152 to 160 are Lumenal, thylakoid-facing; it reads DKTLTLGLF.

It belongs to the cytochrome b family. PetD subfamily. The 4 large subunits of the cytochrome b6-f complex are cytochrome b6, subunit IV (17 kDa polypeptide, PetD), cytochrome f and the Rieske protein, while the 4 small subunits are PetG, PetL, PetM and PetN. The complex functions as a dimer.

Its subcellular location is the cellular thylakoid membrane. Component of the cytochrome b6-f complex, which mediates electron transfer between photosystem II (PSII) and photosystem I (PSI), cyclic electron flow around PSI, and state transitions. The sequence is that of Cytochrome b6-f complex subunit 4 from Mastigocladus laminosus (Fischerella sp.).